A 186-amino-acid chain; its full sequence is Peptidyl-tRNA hydrolase (186 aa).

Residue Tyr-13 participates in tRNA binding. Residue His-18 is the Proton acceptor of the active site. Residues Tyr-59, Asn-61, and Asn-107 each contribute to the tRNA site.

The protein belongs to the PTH family. Monomer.

It is found in the cytoplasm. The catalysed reaction is an N-acyl-L-alpha-aminoacyl-tRNA + H2O = an N-acyl-L-amino acid + a tRNA + H(+). In terms of biological role, hydrolyzes ribosome-free peptidyl-tRNAs (with 1 or more amino acids incorporated), which drop off the ribosome during protein synthesis, or as a result of ribosome stalling. Functionally, catalyzes the release of premature peptidyl moieties from peptidyl-tRNA molecules trapped in stalled 50S ribosomal subunits, and thus maintains levels of free tRNAs and 50S ribosomes. This chain is Peptidyl-tRNA hydrolase, found in Thermotoga petrophila (strain ATCC BAA-488 / DSM 13995 / JCM 10881 / RKU-1).